Consider the following 49-residue polypeptide: Large ribosomal subunit protein bL34 (49 aa).

Belongs to the bacterial ribosomal protein bL34 family.

The polypeptide is Large ribosomal subunit protein bL34 (Sorangium cellulosum (strain So ce56) (Polyangium cellulosum (strain So ce56))).